A 513-amino-acid polypeptide reads, in one-letter code: Coiled-coil domain-containing protein 102B (513 aa).

The segment at 1 to 217 (MNLDSIHRLI…IDSLKLSEEM (217 aa)) is required for centriolar localization and for interaction with CEP250, CROCC, LRRC45 and NEK2. Serine 21, serine 22, serine 34, serine 135, serine 142, serine 194, and serine 210 each carry phosphoserine. Residues 72–142 (ELRLRELEEV…ELSTLKKKQS (71 aa)) are a coiled coil. Coiled-coil stretches lie at residues 268-337 (QKIL…ESKS) and 363-513 (WDKR…LQNW). Serine 401, serine 404, and serine 406 each carry phosphoserine. The disordered stretch occupies residues 493-513 (LDEEKERNENLETELRHLQNW).

In terms of assembly, interacts (via N-terminus) with centriolar protein CEP250/CNAP1; the interaction results in recruitment of CCDC102B to the proximal ends of centrioles. Interacts (via N-terminus) with CROCC/rootletin and LRRC45. Interacts (via N-terminus) with serine/threonine-protein kinase NEK2; the interaction results in phosphorylation of CCDC102B. Phosphorylated directly or indirectly by NEK2 during mitosis which causes dissociation of CCDC102B from the centrosome and allows for centrosome separation.

It is found in the cytoplasm. It localises to the cytoskeleton. The protein localises to the microtubule organizing center. The protein resides in the centrosome. Its subcellular location is the centriole. Its function is as follows. During interphase, forms fibers at the proximal ends of centrioles to maintain centrosome cohesion. During mitosis, dissociates from the centrosome following phosphorylation to allow centrosome separation. Contributes to CROCC/rootletin filament formation. The chain is Coiled-coil domain-containing protein 102B (CCDC102B) from Homo sapiens (Human).